Reading from the N-terminus, the 86-residue chain is Weak toxin 1 (86 aa).

The signal sequence occupies residues 1-23; sequence MKTLLLTLVVVAIVCLDLGYTLT. 5 disulfide bridges follow: Cys24/Cys45, Cys27/Cys32, Cys38/Cys63, Cys67/Cys78, and Cys79/Cys84.

The protein belongs to the three-finger toxin family. Ancestral subfamily. Orphan group II sub-subfamily. Expressed by the venom gland.

It localises to the secreted. Binds with low affinity to muscular (alpha-1-beta-1-delta-epsilon/CHRNA1-CHRNB1-CHRND-CHRNE) and very low affinity to neuronal (alpha-7/CHRNA7) nicotinic acetylcholine receptor (nAChR). The protein is Weak toxin 1 of Bungarus candidus (Malayan krait).